A 445-amino-acid polypeptide reads, in one-letter code: 6-phosphogluconate dehydrogenase, decarboxylating (445 aa).

NADP(+)-binding positions include 1 to 4 (AVMG), 22 to 24 (NRS), 63 to 65 (VKA), and N91. Substrate-binding positions include N91 and 117 to 119 (SGG). K172 serves as the catalytic Proton acceptor. 175–176 (HN) contributes to the substrate binding site. Catalysis depends on E179, which acts as the Proton donor. Substrate is bound by residues Y180, K249, R276, R434, and H440.

Belongs to the 6-phosphogluconate dehydrogenase family. As to quaternary structure, homodimer.

It carries out the reaction 6-phospho-D-gluconate + NADP(+) = D-ribulose 5-phosphate + CO2 + NADPH. It functions in the pathway carbohydrate degradation; pentose phosphate pathway; D-ribulose 5-phosphate from D-glucose 6-phosphate (oxidative stage): step 3/3. Functionally, catalyzes the oxidative decarboxylation of 6-phosphogluconate to ribulose 5-phosphate and CO(2), with concomitant reduction of NADP to NADPH. This Shigella boydii protein is 6-phosphogluconate dehydrogenase, decarboxylating (gnd).